We begin with the raw amino-acid sequence, 809 residues long: MAQILLHGTLHATIYEVDELHGGGGGNFFSKLKQNIEETVGIGKGVTKLYATIDLEKARVGRTRIIENETTNPKWNESFHIYCGHLASNIIFTVKDDNPIGATLIGRAYVPVSEVLDGHEIDKWVEILDTEKNPIEGGSKIHVRLQYFDVLKDRNWARGIRSPKYPGVPYTFFSQRQGCKVFLYQDAHVPDNFVPKIPLAGGKNYEAHRCWEDIFDAITNAKHLIYITGWSVYTEISLIRDSRRPKAGGDQTIGELLKKKASEGVRVLMLVWDDRTSVGLLKKDGLMATHDEETEQFFRDTDVHCVLCPRNPDDGGSIVQDLQISTMFTHHQKIVVVDSALPGGGGSDKRRIVSFVGGLDLCDGRYDTAFHSLFRTLDTAHHDDFHQPNFPGAAITKGGPREPWHDIHSRVEGPIAWDVLFNFEQRWRKQGGKDILAPLRELEDVIIPPSPVTFPDDHETWNVQLFRSIDGGAAFGFPDTPEDAAKAGLVSGKDNIIDRSIQDAYIHAIRRAKNFIYIENQYFLGSSFSWNNDDIKREEIGALHLIPKELSLKIVSKIEAGERFAVYVVVPMWPEGIPESSSVQAILDWQKRTIEMMYKDVVQALRAKGSDEDPRNYLTFFCLGNREVKKSGEYEPAEQPEPDSDYQRAQEARRFMIYVHTKMMIVDDEYIIIGSANINQRSMDGARDSEIAMGGYQPYHLANTQPARGQVYGFRMSLWYEHLGMLHDTFQRPESEECINKVNQIADKYWDLYSSESLERDLPGHLLRYPIGVASEGEVTELPGFEFFPDTKARILGAKADYLPPILTT.

Residues 1 to 125 (MAQILLHGTL…LDGHEIDKWV (125 aa)) form the C2 domain. Asp186 is a Ca(2+) binding site. In terms of domain architecture, PLD phosphodiesterase 1 spans 326–365 (TMFTHHQKIVVVDSALPGGGGSDKRRIVSFVGGLDLCDGR). Residues His331, Lys333, and Asp338 contribute to the active site. His331 serves as a coordination point for a 1,2-diacyl-sn-glycero-3-phosphate. The Ca(2+) site is built by His371 and His405. Gln521 and His660 together coordinate a 1,2-diacyl-sn-glycero-3-phosphate. Residues 655 to 682 (FMIYVHTKMMIVDDEYIIIGSANINQRS) enclose the PLD phosphodiesterase 2 domain. Active-site residues include His660, Lys662, and Asp667. Glu721 contacts Ca(2+).

The protein belongs to the phospholipase D family. C2-PLD subfamily. Ca(2+) is required as a cofactor.

It carries out the reaction a 1,2-diacyl-sn-glycero-3-phosphocholine + H2O = a 1,2-diacyl-sn-glycero-3-phosphate + choline + H(+). Its function is as follows. Hydrolyzes glycerol-phospholipids at the terminal phosphodiesteric bond. Plays an important role in various cellular processes. The protein is Phospholipase D alpha 1 (PLD1) of Vigna unguiculata (Cowpea).